Reading from the N-terminus, the 51-residue chain is Protein SspM (51 aa).

It belongs to the alpha/beta-type SASP family.

The protein is Protein SspM (sspM) of Mycolicibacterium phlei (Mycobacterium phlei).